A 46-amino-acid polypeptide reads, in one-letter code: Sperm protamine P1 (46 aa).

Belongs to the protamine P1 family. Testis.

Its subcellular location is the nucleus. The protein resides in the chromosome. In terms of biological role, protamines substitute for histones in the chromatin of sperm during the haploid phase of spermatogenesis. They compact sperm DNA into a highly condensed, stable and inactive complex. The sequence is that of Sperm protamine P1 (PRM1) from Hypsugo savii (Savi's pipistrelle).